The chain runs to 345 residues: Eukaryotic translation initiation factor 3 subunit F (345 aa).

The MPN domain occupies 30-166 (VVIQPQAIFS…TRAYISAPVG (137 aa)). Positions 310–345 (EGASAEAGAQRGQRGGRGGRGGQQRTQERASEEVRA) are disordered. The segment covering 312 to 321 (ASAEAGAQRG) has biased composition (low complexity). Residues 322 to 331 (QRGGRGGRGG) are compositionally biased toward gly residues. A compositionally biased stretch (basic and acidic residues) spans 335-345 (TQERASEEVRA).

This sequence belongs to the eIF-3 subunit F family. In terms of assembly, component of the eukaryotic translation initiation factor 3 (eIF-3) complex.

It localises to the cytoplasm. Functionally, component of the eukaryotic translation initiation factor 3 (eIF-3) complex, which is involved in protein synthesis of a specialized repertoire of mRNAs and, together with other initiation factors, stimulates binding of mRNA and methionyl-tRNAi to the 40S ribosome. The eIF-3 complex specifically targets and initiates translation of a subset of mRNAs involved in cell proliferation. The polypeptide is Eukaryotic translation initiation factor 3 subunit F (Neosartorya fischeri (strain ATCC 1020 / DSM 3700 / CBS 544.65 / FGSC A1164 / JCM 1740 / NRRL 181 / WB 181) (Aspergillus fischerianus)).